Consider the following 593-residue polypeptide: UvrABC system protein C (593 aa).

Residues 14–91 (DKPGCYLMKN…IKEHDPRYNV (78 aa)) form the GIY-YIG domain. The region spanning 196–231 (EEMKQTLTEKMLQAAENMEFERAKEYRDQIKSIEAV) is the UVR domain.

Belongs to the UvrC family. As to quaternary structure, interacts with UvrB in an incision complex.

The protein resides in the cytoplasm. The UvrABC repair system catalyzes the recognition and processing of DNA lesions. UvrC both incises the 5' and 3' sides of the lesion. The N-terminal half is responsible for the 3' incision and the C-terminal half is responsible for the 5' incision. In Brevibacillus brevis (strain 47 / JCM 6285 / NBRC 100599), this protein is UvrABC system protein C.